The following is a 207-amino-acid chain: MKNVNDLIEKAIELRNRGLRSGEIADELNISRETATWLLTRARKETGAQAPKDIFIDWSTIGKSSSRLMLIATCMADMVEEVLNEMDTNVDVVVGIALSGVPLANVVAYQYGVDLAVIHPGKHRSDDTGKHHQMQPTVSENYANVKGKRCVIIDDVITTGSTMEETIKLIEDQGGEAVAIAVIIDKRGADTISNVPVKHLIRIGRVD.

This sequence belongs to the purine/pyrimidine phosphoribosyltransferase family. GfcR subfamily.

This is Transcriptional regulator GfcR from Methanocella arvoryzae (strain DSM 22066 / NBRC 105507 / MRE50).